Consider the following 487-residue polypeptide: ATP synthase subunit beta (487 aa).

Residue 164–171 (GGAGVGKT) participates in ATP binding.

This sequence belongs to the ATPase alpha/beta chains family. As to quaternary structure, F-type ATPases have 2 components, CF(1) - the catalytic core - and CF(0) - the membrane proton channel. CF(1) has five subunits: alpha(3), beta(3), gamma(1), delta(1), epsilon(1). CF(0) has four main subunits: a(1), b(1), b'(1) and c(9-12).

The protein resides in the cellular thylakoid membrane. The catalysed reaction is ATP + H2O + 4 H(+)(in) = ADP + phosphate + 5 H(+)(out). Produces ATP from ADP in the presence of a proton gradient across the membrane. The catalytic sites are hosted primarily by the beta subunits. The polypeptide is ATP synthase subunit beta (Synechococcus sp. (strain CC9605)).